Here is a 451-residue protein sequence, read N- to C-terminus: Tubulin alpha-1A chain (451 aa).

GTP is bound by residues Gly10, Gln11, Ala12, and Gln15. At Lys40 the chain carries N6-acetyllysine. The GTP site is built by Glu71, Ala99, Ser140, Gly143, Gly144, Thr145, Gly146, Thr179, Glu183, Asn206, Tyr224, Asn228, and Leu252. Glu71 is a binding site for Mg(2+). Residue Glu254 is part of the active site. Tyr282 carries the 3'-nitrotyrosine modification. Position 439 is a phosphoserine (Ser439). Glu443 and Glu445 each carry 5-glutamyl polyglutamate. Tyr451 bears the 3'-nitrotyrosine mark.

This sequence belongs to the tubulin family. As to quaternary structure, heterodimer of alpha- and beta-tubulin. A typical microtubule is a hollow water-filled tube with an outer diameter of 25 nm and an inner diameter of 15 nM. Alpha-beta heterodimers associate head-to-tail to form protofilaments running lengthwise along the microtubule wall with the beta-tubulin subunit facing the microtubule plus end conferring a structural polarity. Microtubules usually have 13 protofilaments but different protofilament numbers can be found in some organisms and specialized cells. Interacts with gamma-tubulin; the interaction allows microtubules to nucleate from the gamma-tubulin ring complex (gTuRC). Nascent microtubule interacts (via alpha-tubulin MREC motif) with TTC5/STRAP; this interaction may result in tubulin mRNA-targeted degradation. Component of sperm flagellar doublet microtubules. Requires Mg(2+) as cofactor. In terms of processing, some glutamate residues at the C-terminus are polyglycylated, resulting in polyglycine chains on the gamma-carboxyl group. Glycylation is mainly limited to tubulin incorporated into axonemes (cilia and flagella) whereas glutamylation is prevalent in neuronal cells, centrioles, axonemes, and the mitotic spindle. Both modifications can coexist on the same protein on adjacent residues, and lowering polyglycylation levels increases polyglutamylation, and reciprocally. Cilia and flagella glycylation is required for their stability and maintenance. Flagella glycylation controls sperm motility. Some glutamate residues at the C-terminus are polyglutamylated, resulting in polyglutamate chains on the gamma-carboxyl group. Polyglutamylation plays a key role in microtubule severing by spastin (SPAST). SPAST preferentially recognizes and acts on microtubules decorated with short polyglutamate tails: severing activity by SPAST increases as the number of glutamates per tubulin rises from one to eight, but decreases beyond this glutamylation threshold. Glutamylation is also involved in cilia motility. Post-translationally, acetylation of alpha chains at Lys-40 is located inside the microtubule lumen. This modification has been correlated with increased microtubule stability, intracellular transport and ciliary assembly. In terms of processing, methylation of alpha chains at Lys-40 is found in mitotic microtubules and is required for normal mitosis and cytokinesis contributing to genomic stability. Nitration of Tyr-451 is irreversible and interferes with normal dynein intracellular distribution. Post-translationally, undergoes a tyrosination/detyrosination cycle, the cyclic removal and re-addition of a C-terminal tyrosine residue by the enzymes tubulin tyrosine carboxypeptidase (MATCAP1, VASH1 or VASH2) and tubulin tyrosine ligase (TTL), respectively. In terms of processing, tyrosination promotes microtubule interaction with CAP-Gly domain-containing proteins such as CLIP1, CLIP2 and DCTN1. Tyrosination regulates the initiation of dynein-dynactin motility via interaction with DCTN1, which brings the dynein-dynactin complex into contact with microtubules. In neurons, tyrosinated tubulins mediate the initiation of retrograde vesicle transport. Detyrosination is involved in metaphase plate congression by guiding chromosomes during mitosis: detyrosination promotes interaction with CENPE, promoting pole-proximal transport of chromosomes toward the equator. Detyrosination increases microtubules-dependent mechanotransduction in dystrophic cardiac and skeletal muscle. In cardiomyocytes, detyrosinated microtubules are required to resist to contractile compression during contraction: detyrosination promotes association with desmin (DES) at force-generating sarcomeres, leading to buckled microtubules and mechanical resistance to contraction.

It localises to the cytoplasm. Its subcellular location is the cytoskeleton. The protein localises to the flagellum axoneme. The catalysed reaction is GTP + H2O = GDP + phosphate + H(+). In terms of biological role, tubulin is the major constituent of microtubules, protein filaments consisting of alpha- and beta-tubulin heterodimers. Microtubules grow by the addition of GTP-tubulin dimers to the microtubule end, where a stabilizing cap forms. Below the cap, tubulin dimers are in GDP-bound state, owing to GTPase activity of alpha-tubulin. The chain is Tubulin alpha-1A chain (TUBA1A) from Sus scrofa (Pig).